Consider the following 218-residue polypeptide: Protein Syd (218 aa).

The protein belongs to the Syd family.

It is found in the cell inner membrane. Functionally, interacts with the SecY protein in vivo. May bind preferentially to an uncomplexed state of SecY, thus functioning either as a chelating agent for excess SecY in the cell or as a regulatory factor that negatively controls the translocase function. This chain is Protein Syd, found in Shewanella denitrificans (strain OS217 / ATCC BAA-1090 / DSM 15013).